Consider the following 570-residue polypeptide: MSQQDSPANADHRRRHSSIVVDGPGKAASRAMLRAVGFTDEDFKKPQVGIASTWSRVTPCNSHINVLADAASDGADAAGGKGVVFNTITISDGIANGTEGMKYSMASREIIADSIEAVSGCEGFDGVVAIGGCDKNMPGCMIGLARLNRPSIFVYGGTIQPGAGHTDLVSVFEAMGAYSQGNKSLIEVKQIEEVAIPGPGSCGGMYTANTMASAIEAMGMSLPNSSAQDAVSQSKKDDSRAAGEAVLKLLELDIKPSDIMTRKAFENAITVVIALGGSTNAVLHLIAMANTIGVELSLDDFTEIGKRVPVLADLRPSGHYLMSELVAIGGIQPMMKILLDAGLLHGDCLTVTGKTLAENLADVTPYPTGQEIIKPLEAPIKSSSHLRILYGNLAPEGAVAKITGKEGTRFTGRARVFNSEEEAQARINDLTVAAGDVVVIRYEGPKGGPGMREMLTPTSAIMGRGLGDKVALITDGRFSGGSHGFVVGHITPEAFVGGPIGLVEDGDEITIDAENDIMTLHIDDAEMARRRAAWKRPAPRYTRGTLAKYAKTVSSASKGAVTDLPEALDD.

The tract at residues Met1–Gly25 is disordered. Cys60 is a [2Fe-2S] cluster binding site. Position 92 (Asp92) interacts with Mg(2+). Cys133 provides a ligand contact to [2Fe-2S] cluster. Residues Asp134 and Lys135 each contribute to the Mg(2+) site. Position 135 is an N6-carboxylysine (Lys135). Residue Cys202 participates in [2Fe-2S] cluster binding. Mg(2+) is bound at residue Glu453. Residue Ser479 is the Proton acceptor of the active site.

This sequence belongs to the IlvD/Edd family. As to quaternary structure, homodimer. [2Fe-2S] cluster is required as a cofactor. Requires Mg(2+) as cofactor.

It catalyses the reaction (2R)-2,3-dihydroxy-3-methylbutanoate = 3-methyl-2-oxobutanoate + H2O. It carries out the reaction (2R,3R)-2,3-dihydroxy-3-methylpentanoate = (S)-3-methyl-2-oxopentanoate + H2O. It participates in amino-acid biosynthesis; L-isoleucine biosynthesis; L-isoleucine from 2-oxobutanoate: step 3/4. It functions in the pathway amino-acid biosynthesis; L-valine biosynthesis; L-valine from pyruvate: step 3/4. Its function is as follows. Functions in the biosynthesis of branched-chain amino acids. Catalyzes the dehydration of (2R,3R)-2,3-dihydroxy-3-methylpentanoate (2,3-dihydroxy-3-methylvalerate) into 2-oxo-3-methylpentanoate (2-oxo-3-methylvalerate) and of (2R)-2,3-dihydroxy-3-methylbutanoate (2,3-dihydroxyisovalerate) into 2-oxo-3-methylbutanoate (2-oxoisovalerate), the penultimate precursor to L-isoleucine and L-valine, respectively. In Chromohalobacter salexigens (strain ATCC BAA-138 / DSM 3043 / CIP 106854 / NCIMB 13768 / 1H11), this protein is Dihydroxy-acid dehydratase.